The primary structure comprises 120 residues: Putative pterin-4-alpha-carbinolamine dehydratase (120 aa).

The protein belongs to the pterin-4-alpha-carbinolamine dehydratase family.

The catalysed reaction is (4aS,6R)-4a-hydroxy-L-erythro-5,6,7,8-tetrahydrobiopterin = (6R)-L-erythro-6,7-dihydrobiopterin + H2O. This chain is Putative pterin-4-alpha-carbinolamine dehydratase, found in Bdellovibrio bacteriovorus (strain ATCC 15356 / DSM 50701 / NCIMB 9529 / HD100).